The chain runs to 363 residues: F-box protein At3g44326 (363 aa).

The disordered stretch occupies residues 1 to 23; that stretch reads MLSSSSSSTVEQPSRGGSPGINA. An F-box domain is found at 27-66; that stretch reads DVLRSNILTRLDGSSLAALSCTCSNLNSFCSDESLWRQQC.

The polypeptide is F-box protein At3g44326 (Arabidopsis thaliana (Mouse-ear cress)).